Reading from the N-terminus, the 510-residue chain is Glycerol kinase (510 aa).

Thr13 is a binding site for ADP. Residues Thr13 and Thr14 each coordinate ATP. Thr13 contributes to the sn-glycerol 3-phosphate binding site. Arg17 contacts ADP. Arg83, Glu84, Tyr135, and Asp255 together coordinate sn-glycerol 3-phosphate. 5 residues coordinate glycerol: Arg83, Glu84, Tyr135, Asp255, and Gln256. Residues Thr277, Gly321, Gly421, and Asn425 each contribute to the ADP site. The ATP site is built by Thr277, Gly321, and Gly421.

Belongs to the FGGY kinase family.

The enzyme catalyses glycerol + ATP = sn-glycerol 3-phosphate + ADP + H(+). It functions in the pathway polyol metabolism; glycerol degradation via glycerol kinase pathway; sn-glycerol 3-phosphate from glycerol: step 1/1. Functionally, key enzyme in the regulation of glycerol uptake and metabolism. Catalyzes the phosphorylation of glycerol to yield sn-glycerol 3-phosphate. This chain is Glycerol kinase, found in Halobacterium salinarum (strain ATCC 29341 / DSM 671 / R1).